We begin with the raw amino-acid sequence, 59 residues long: Cecropin-B2 (59 aa).

A signal peptide spans 1-23 (MNFNKLFLIVILAALLLLGQTEA). Leu57 carries the leucine amide modification.

It belongs to the cecropin family.

The protein resides in the secreted. Its function is as follows. Cecropins have lytic and antibacterial activity against several Gram-positive and Gram-negative bacteria. This Culex pipiens pipiens (Northern house mosquito) protein is Cecropin-B2 (CECB2).